The primary structure comprises 88 residues: Small ribosomal subunit protein uS15 (88 aa).

The protein belongs to the universal ribosomal protein uS15 family. Part of the 30S ribosomal subunit. Forms a bridge to the 50S subunit in the 70S ribosome, contacting the 23S rRNA.

One of the primary rRNA binding proteins, it binds directly to 16S rRNA where it helps nucleate assembly of the platform of the 30S subunit by binding and bridging several RNA helices of the 16S rRNA. In terms of biological role, forms an intersubunit bridge (bridge B4) with the 23S rRNA of the 50S subunit in the ribosome. This is Small ribosomal subunit protein uS15 from Albidiferax ferrireducens (strain ATCC BAA-621 / DSM 15236 / T118) (Rhodoferax ferrireducens).